The primary structure comprises 429 residues: Serine--tRNA ligase (429 aa).

An L-serine-binding site is contributed by 236 to 238 (TGE). 267–269 (RSE) provides a ligand contact to ATP. Glu-290 lines the L-serine pocket. Position 354-357 (354-357 (EISS)) interacts with ATP. Ser-390 is a binding site for L-serine.

This sequence belongs to the class-II aminoacyl-tRNA synthetase family. Type-1 seryl-tRNA synthetase subfamily. Homodimer. The tRNA molecule binds across the dimer.

The protein resides in the cytoplasm. The enzyme catalyses tRNA(Ser) + L-serine + ATP = L-seryl-tRNA(Ser) + AMP + diphosphate + H(+). It catalyses the reaction tRNA(Sec) + L-serine + ATP = L-seryl-tRNA(Sec) + AMP + diphosphate + H(+). Its pathway is aminoacyl-tRNA biosynthesis; selenocysteinyl-tRNA(Sec) biosynthesis; L-seryl-tRNA(Sec) from L-serine and tRNA(Sec): step 1/1. Functionally, catalyzes the attachment of serine to tRNA(Ser). Is also able to aminoacylate tRNA(Sec) with serine, to form the misacylated tRNA L-seryl-tRNA(Sec), which will be further converted into selenocysteinyl-tRNA(Sec). The chain is Serine--tRNA ligase from Vesicomyosocius okutanii subsp. Calyptogena okutanii (strain HA).